Consider the following 70-residue polypeptide: Large ribosomal subunit protein bL31c (70 aa).

The protein belongs to the bacterial ribosomal protein bL31 family. Type A subfamily. As to quaternary structure, part of the 50S ribosomal subunit.

It localises to the plastid. Its subcellular location is the chloroplast. Functionally, binds the 23S rRNA. The chain is Large ribosomal subunit protein bL31c from Porphyra purpurea (Red seaweed).